Reading from the N-terminus, the 230-residue chain is MSSTSLLDEFGTPVQRVERAIEALKNGLGVLLMDDEDRENEGDLIFSAQHLTEAQMALMIREGSGIVCLCLTEERANWLDLPPMVKDNCSKNQTAFTVSIEAKEGVTTGVSAKDRVTTVKTATYFDAQPEDLARPGHVFPLVAKTNGVLARRGHTEGTIDLMYLANLVPSGILCELTNPDGTMAKLPETIEFARRHGMPVLTIEDIVDYRTGIDLRNEYKSGLVREVSWS.

D-ribulose 5-phosphate is bound by residues 38 to 39 (RE), D43, 151 to 155 (RRGHT), and E175. A Mg(2+)-binding site is contributed by E39. H154 is a binding site for Mg(2+).

The protein belongs to the DHBP synthase family. Homodimer. Requires Mg(2+) as cofactor. It depends on Mn(2+) as a cofactor.

The enzyme catalyses D-ribulose 5-phosphate = (2S)-2-hydroxy-3-oxobutyl phosphate + formate + H(+). The protein operates within cofactor biosynthesis; riboflavin biosynthesis; 2-hydroxy-3-oxobutyl phosphate from D-ribulose 5-phosphate: step 1/1. Functionally, catalyzes the conversion of D-ribulose 5-phosphate to formate and 3,4-dihydroxy-2-butanone 4-phosphate. This Vibrio harveyi (Beneckea harveyi) protein is 3,4-dihydroxy-2-butanone 4-phosphate synthase.